The sequence spans 258 residues: Global transcriptional regulator CodY (258 aa).

The interval 1-156 is GAF domain; the sequence is MSSLLEKTRQ…SATIIGLEIL (156 aa). A DNA-binding region (H-T-H motif) is located at residues 204 to 223; sequence ASKIADKVGITRSVIVNALR.

It belongs to the CodY family.

It localises to the cytoplasm. Its function is as follows. DNA-binding global transcriptional regulator which is involved in the adaptive response to starvation and acts by directly or indirectly controlling the expression of numerous genes in response to nutrient availability. During rapid exponential growth, CodY is highly active and represses genes whose products allow adaptation to nutrient depletion. This Clostridium tetani (strain Massachusetts / E88) protein is Global transcriptional regulator CodY.